Reading from the N-terminus, the 526-residue chain is Amino acid transporter heavy chain SLC3A2 (526 aa).

The disordered stretch occupies residues 1–31; it reads MSQDTEVDMKDVELNELEPEKQPMNAADGAA. The Cytoplasmic segment spans residues 1-75; it reads MSQDTEVDMK…AGSPGWVRTR (75 aa). Position 2 is a phosphoserine (S2). T5 carries the phosphothreonine modification. Over residues 7 to 21 the composition is skewed to basic and acidic residues; it reads VDMKDVELNELEPEK. K42 is covalently cross-linked (Glycyl lysine isopeptide (Lys-Gly) (interchain with G-Cter in ubiquitin)). S58 carries the phosphoserine modification. K59 is covalently cross-linked (Glycyl lysine isopeptide (Lys-Gly) (interchain with G-Cter in SUMO2)). The helical; Signal-anchor for type II membrane protein transmembrane segment at 76–99 threads the bilayer; that stretch reads WALLLLFWLGWLGMLAGAVVIIVR. Residues 100–526 lie on the Extracellular side of the membrane; that stretch reads APRCRELPVQ…GLLLQFPFVA (427 aa). N-linked (GlcNAc...) asparagine glycosylation is found at N166, N259, and N263. S300 carries the post-translational modification Phosphoserine. N301 carries N-linked (GlcNAc...) asparagine glycosylation. At S302 the chain carries Phosphoserine. N-linked (GlcNAc...) asparagine glycosylation is found at N318, N385, and N399. S420 is subject to Phosphoserine. N509 carries an N-linked (GlcNAc...) asparagine glycan.

Belongs to the SLC3A transporter family. As to quaternary structure, disulfide-linked heterodimer with a non-glycosylated light chain (SLC7A5, SLC7A6, SLC7A7, SLC7A8, SLC7A10 or SLC7A11). Interacts with TLCD3A/CT120 and ICAM1. Constitutively and specifically associates with beta-1 integrins (alpha-2/beta-1, alpha-3/beta-1, alpha-5/beta-1 and alpha-6/beta-1), but minimally with alpha-4/beta-1. Interacts with LAPTM4B; recruits SLC3A2 and SLC7A5 to lysosomes to promote leucine uptake into these organelles and is required for mTORC1 activation. Phosphorylation on Ser-300 or Ser-302 and on Ser-420 by ecto-protein kinases favors heterotypic cell-cell interactions. In terms of processing, N-glycosylated; N-glycosylation is crucial for trafficking and stability of SLC3A2 to the plasma membrane. As to expression, detected on the surface of embryonic epithelial cells in the epidermis, thymus, kidney, intestine, brain choroid plexus, and in retina. Detected in adult and embryonic brain, spleen, kidney, intestine and liver, and in adult testis (at protein level). Observed in all adult tissues tested with strongest expression in kidney, small intestine, spleen, thymus and liver. Moderate expression in brain, stomach, heart, testis, lung, skin, pancreas and skeletal muscle. In brain expressed on capillary endothelia in cerebral cortex.

It is found in the apical cell membrane. It localises to the cell membrane. Its subcellular location is the cell junction. The protein resides in the lysosome membrane. The protein localises to the melanosome. It is found in the basolateral cell membrane. Functionally, acts as a chaperone that facilitates biogenesis and trafficking of functional transporters heterodimers to the plasma membrane. Forms heterodimer with SLC7 family transporters (SLC7A5, SLC7A6, SLC7A7, SLC7A8, SLC7A10 and SLC7A11), a group of amino-acid antiporters. Heterodimers function as amino acids exchangers, the specificity of the substrate depending on the SLC7A subunit. Heterodimers SLC3A2/SLC7A6 or SLC3A2/SLC7A7 mediate the uptake of dibasic amino acids. Heterodimer SLC3A2/SLC7A11 functions as an antiporter by mediating the exchange of extracellular anionic L-cystine and intracellular L-glutamate across the cellular plasma membrane. SLC3A2/SLC7A10 translocates small neutral L- and D-amino acids across the plasma membrane. SLC3A2/SLC75 or SLC3A2/SLC7A8 translocates neutral amino acids with broad specificity, thyroid hormones and L-DOPA. SLC3A2 is essential for plasma membrane localization, stability, and the transport activity of SLC7A5 and SLC7A8. When associated with LAPTM4B, the heterodimer SLC7A5 is recruited to lysosomes to promote leucine uptake into these organelles, and thereby mediates mTORC1 activation. Modulates integrin-related signaling and is essential for integrin-dependent cell spreading, migration and tumor progression. The polypeptide is Amino acid transporter heavy chain SLC3A2 (Mus musculus (Mouse)).